Consider the following 125-residue polypeptide: Ribosome-binding factor A (125 aa).

Belongs to the RbfA family. In terms of assembly, monomer. Binds 30S ribosomal subunits, but not 50S ribosomal subunits or 70S ribosomes.

It is found in the cytoplasm. One of several proteins that assist in the late maturation steps of the functional core of the 30S ribosomal subunit. Associates with free 30S ribosomal subunits (but not with 30S subunits that are part of 70S ribosomes or polysomes). Required for efficient processing of 16S rRNA. May interact with the 5'-terminal helix region of 16S rRNA. This Methylobacillus flagellatus (strain ATCC 51484 / DSM 6875 / VKM B-1610 / KT) protein is Ribosome-binding factor A.